Reading from the N-terminus, the 949-residue chain is Glycine dehydrogenase (decarboxylating) (949 aa).

Lys704 bears the N6-(pyridoxal phosphate)lysine mark.

The protein belongs to the GcvP family. The glycine cleavage system is composed of four proteins: P, T, L and H. Pyridoxal 5'-phosphate serves as cofactor.

The enzyme catalyses N(6)-[(R)-lipoyl]-L-lysyl-[glycine-cleavage complex H protein] + glycine + H(+) = N(6)-[(R)-S(8)-aminomethyldihydrolipoyl]-L-lysyl-[glycine-cleavage complex H protein] + CO2. The glycine cleavage system catalyzes the degradation of glycine. The P protein binds the alpha-amino group of glycine through its pyridoxal phosphate cofactor; CO(2) is released and the remaining methylamine moiety is then transferred to the lipoamide cofactor of the H protein. The chain is Glycine dehydrogenase (decarboxylating) from Bacteroides fragilis (strain YCH46).